Consider the following 360-residue polypeptide: UDP-N-acetylglucosamine--N-acetylmuramyl-(pentapeptide) pyrophosphoryl-undecaprenol N-acetylglucosamine transferase (360 aa).

UDP-N-acetyl-alpha-D-glucosamine contacts are provided by residues 13–15 (TGG), arginine 164, serine 192, and glutamine 293.

The protein belongs to the glycosyltransferase 28 family. MurG subfamily.

It localises to the cell inner membrane. It carries out the reaction di-trans,octa-cis-undecaprenyl diphospho-N-acetyl-alpha-D-muramoyl-L-alanyl-D-glutamyl-meso-2,6-diaminopimeloyl-D-alanyl-D-alanine + UDP-N-acetyl-alpha-D-glucosamine = di-trans,octa-cis-undecaprenyl diphospho-[N-acetyl-alpha-D-glucosaminyl-(1-&gt;4)]-N-acetyl-alpha-D-muramoyl-L-alanyl-D-glutamyl-meso-2,6-diaminopimeloyl-D-alanyl-D-alanine + UDP + H(+). Its pathway is cell wall biogenesis; peptidoglycan biosynthesis. Cell wall formation. Catalyzes the transfer of a GlcNAc subunit on undecaprenyl-pyrophosphoryl-MurNAc-pentapeptide (lipid intermediate I) to form undecaprenyl-pyrophosphoryl-MurNAc-(pentapeptide)GlcNAc (lipid intermediate II). This is UDP-N-acetylglucosamine--N-acetylmuramyl-(pentapeptide) pyrophosphoryl-undecaprenol N-acetylglucosamine transferase from Chromobacterium violaceum (strain ATCC 12472 / DSM 30191 / JCM 1249 / CCUG 213 / NBRC 12614 / NCIMB 9131 / NCTC 9757 / MK).